Reading from the N-terminus, the 964-residue chain is Phosphoenolpyruvate carboxylase (964 aa).

Ser-11 is subject to Phosphoserine. Residues His-172 and Lys-600 contribute to the active site.

This sequence belongs to the PEPCase type 1 family. As to quaternary structure, homotetramer. It depends on Mg(2+) as a cofactor.

Its subcellular location is the cytoplasm. It carries out the reaction oxaloacetate + phosphate = phosphoenolpyruvate + hydrogencarbonate. The protein operates within photosynthesis; C4 acid pathway. With respect to regulation, by light-reversible phosphorylation. Through the carboxylation of phosphoenolpyruvate (PEP) it forms oxaloacetate, a four-carbon dicarboxylic acid source for the tricarboxylic acid cycle. The protein is Phosphoenolpyruvate carboxylase of Amaranthus hypochondriacus (Prince-of-Wales feather).